Consider the following 278-residue polypeptide: Rhomboid protease GlpG (278 aa).

6 helical membrane-spanning segments follow: residues 95–115, 143–163, 170–190, 192–212, 224–241, and 245–267; these read GPLT…MQIL, AFLH…WYLG, LGSG…GWAQ, LFSG…MGYC, LMLP…LVAG, and ILGM…LMAF. Serine 202 functions as the Nucleophile in the catalytic mechanism. The active site involves histidine 255.

It belongs to the peptidase S54 family.

It localises to the cell inner membrane. The enzyme catalyses Cleaves type-1 transmembrane domains using a catalytic dyad composed of serine and histidine that are contributed by different transmembrane domains.. Rhomboid-type serine protease that catalyzes intramembrane proteolysis. The polypeptide is Rhomboid protease GlpG (Serratia proteamaculans (strain 568)).